Reading from the N-terminus, the 353-residue chain is Methionine import ATP-binding protein MetN (353 aa).

The region spanning 8-249 (LDQIDVTFHQ…PKQPLTQDFI (242 aa)) is the ABC transporter domain. Position 42–49 (42–49 (GYSGAGKS)) interacts with ATP.

This sequence belongs to the ABC transporter superfamily. Methionine importer (TC 3.A.1.24) family. As to quaternary structure, the complex is composed of two ATP-binding proteins (MetN), two transmembrane proteins (MetI) and a solute-binding protein (MetQ).

The protein localises to the cell membrane. The catalysed reaction is L-methionine(out) + ATP + H2O = L-methionine(in) + ADP + phosphate + H(+). The enzyme catalyses D-methionine(out) + ATP + H2O = D-methionine(in) + ADP + phosphate + H(+). Functionally, part of the ABC transporter complex MetNIQ involved in methionine import. Responsible for energy coupling to the transport system. The protein is Methionine import ATP-binding protein MetN of Streptococcus pneumoniae (strain ATCC BAA-255 / R6).